The following is a 555-amino-acid chain: Alpha-copaene synthase (555 aa).

Mg(2+)-binding residues include Asp312, Asp316, Asp452, Ser456, and Glu460. The DDXXD motif motif lies at 312–316; the sequence is DDTYD.

The protein belongs to the terpene synthase family. It depends on Mg(2+) as a cofactor. In terms of tissue distribution, mainly expressed in sunflower trichomes.

The enzyme catalyses (2E,6E)-farnesyl diphosphate = alpha-copaene + diphosphate. The catalysed reaction is (2E,6E)-farnesyl diphosphate = alpha-muurolene + diphosphate. It carries out the reaction (2E,6E)-farnesyl diphosphate = alpha-humulene + diphosphate. Its pathway is secondary metabolite biosynthesis; terpenoid biosynthesis. Involved in the biosynthesis of germacrene-derived sesquiterpene lactones. Catalyzes the cyclization of farnesyl diphosphate to alpha-copaene, delta-cadinene, alpha-muurolene, beta-caryophyllene and alpha-humulene. In Helianthus annuus (Common sunflower), this protein is Alpha-copaene synthase (CS).